A 620-amino-acid polypeptide reads, in one-letter code: DNA mismatch repair protein MutL (620 aa).

This sequence belongs to the DNA mismatch repair MutL/HexB family.

In terms of biological role, this protein is involved in the repair of mismatches in DNA. It is required for dam-dependent methyl-directed DNA mismatch repair. May act as a 'molecular matchmaker', a protein that promotes the formation of a stable complex between two or more DNA-binding proteins in an ATP-dependent manner without itself being part of a final effector complex. The sequence is that of DNA mismatch repair protein MutL from Clostridium tetani (strain Massachusetts / E88).